The following is a 334-amino-acid chain: Chorismatase (334 aa).

Residues Tyr143, Arg150, Tyr203, and Arg216 each contribute to the substrate site. The active-site Proton acceptor is the Glu328.

The protein belongs to the FkbO/Hyg5 family. In terms of assembly, monomer.

The enzyme catalyses chorismate + H2O = (3R,4R)-3,4-dihydroxy-3,4-dihydrobenzoate + pyruvate. Involved in the biosynthesis of the macrocyclic amino acid-linked polyketides rapamycin which is a potent immunosuppressant that prevents T-cell proliferation through initial binding to the immunophilin FKBP12. Catalyzes the hydrolysis of chorismate via a 1,4-conjugate elimination of water to yield (4R,5R)-4,5-dihydroxycyclohexa-1,5-dienecarboxylic acid (DCDC). The sequence is that of Chorismatase (rapK) from Streptomyces rapamycinicus (strain ATCC 29253 / DSM 41530 / NRRL 5491 / AYB-994) (Streptomyces hygroscopicus (strain ATCC 29253)).